We begin with the raw amino-acid sequence, 515 residues long: Putative asparagine synthetase [glutamine-hydrolyzing] 2 (515 aa).

Cys2 functions as the For GATase activity in the catalytic mechanism. A Glutamine amidotransferase type-2 domain is found at 2 to 229; that stretch reads CGINGIIRFG…ARQNLIFDLD (228 aa). L-glutamine contacts are provided by residues 52 to 56, 92 to 94, and Asp114; these read RLAIL and NGE. Residues Ile306 and 378 to 379 each bind ATP; that span reads SG.

This sequence belongs to the asparagine synthetase family.

The catalysed reaction is L-aspartate + L-glutamine + ATP + H2O = L-asparagine + L-glutamate + AMP + diphosphate + H(+). It participates in amino-acid biosynthesis; L-asparagine biosynthesis; L-asparagine from L-aspartate (L-Gln route): step 1/1. This is Putative asparagine synthetase [glutamine-hydrolyzing] 2 from Methanocaldococcus jannaschii (strain ATCC 43067 / DSM 2661 / JAL-1 / JCM 10045 / NBRC 100440) (Methanococcus jannaschii).